The primary structure comprises 132 residues: Bleomycin resistance protein (132 aa).

The VOC domain maps to 1–129 (MLQSIPALPV…DNNLISFFQQ (129 aa)).

It belongs to the bleomycin resistance protein family.

Functionally, binding protein with a strong affinity to the bleomycin family of antibiotics. This chain is Bleomycin resistance protein (bleO), found in Geobacillus stearothermophilus (Bacillus stearothermophilus).